A 2742-amino-acid chain; its full sequence is Neurobeachin-like protein 2 (2742 aa).

Disordered stretches follow at residues 1312-1333 (ALSP…PSES) and 1356-1434 (LERA…QQTP). Pro residues predominate over residues 1384 to 1394 (TPSPLDGPRPF). The segment covering 1421–1433 (GDDTSNTSNPQQT) has biased composition (polar residues). Phosphothreonine is present on Thr-1855. Positions 1903 to 2028 (EKREKLVLSA…LRNQVYSLLL (126 aa)) constitute a BEACH-type PH domain. Residues 2041-2333 (RSPLEMLRAS…QLLKEPHPPR (293 aa)) form the BEACH domain. 7 WD repeats span residues 2374-2412 (LVLA…TWLP), 2436-2479 (KLLS…SLPR), 2482-2519 (LLNQ…VWRL), 2532-2570 (KPVQ…IHTV), 2577-2619 (AALR…TYSL), 2627-2662 (RLRA…ILHL), and 2670-2705 (PPLP…VGAG). A phosphoserine mark is found at Ser-2727 and Ser-2730.

Belongs to the WD repeat neurobeachin family.

Its subcellular location is the endoplasmic reticulum. Probably involved in thrombopoiesis. Plays a role in the development or secretion of alpha-granules, that contain several growth factors important for platelet biogenesis. This Mus musculus (Mouse) protein is Neurobeachin-like protein 2 (Nbeal2).